The primary structure comprises 221 residues: ATP synthase subunit delta (221 aa).

Residues 1-13 (MGPVPEEHQRESE) are compositionally biased toward basic and acidic residues. Positions 1-31 (MGPVPEEHQRESETVASNGANESGAAVTGIP) are disordered.

Belongs to the ATPase delta chain family. In terms of assembly, F-type ATPases have 2 components, F(1) - the catalytic core - and F(0) - the membrane proton channel. F(1) has five subunits: alpha(3), beta(3), gamma(1), delta(1), epsilon(1). F(0) has three main subunits: a(1), b(2) and c(10-14). The alpha and beta chains form an alternating ring which encloses part of the gamma chain. F(1) is attached to F(0) by a central stalk formed by the gamma and epsilon chains, while a peripheral stalk is formed by the delta and b chains.

The protein resides in the cell inner membrane. Its function is as follows. F(1)F(0) ATP synthase produces ATP from ADP in the presence of a proton or sodium gradient. F-type ATPases consist of two structural domains, F(1) containing the extramembraneous catalytic core and F(0) containing the membrane proton channel, linked together by a central stalk and a peripheral stalk. During catalysis, ATP synthesis in the catalytic domain of F(1) is coupled via a rotary mechanism of the central stalk subunits to proton translocation. Functionally, this protein is part of the stalk that links CF(0) to CF(1). It either transmits conformational changes from CF(0) to CF(1) or is implicated in proton conduction. This chain is ATP synthase subunit delta, found in Granulibacter bethesdensis (strain ATCC BAA-1260 / CGDNIH1).